Here is a 210-residue protein sequence, read N- to C-terminus: Probable GTP-binding protein EngB (210 aa).

The EngB-type G domain occupies Thr25 to Glu199. GTP-binding positions include Gly33–Ser40, Gly60–Leu64, Asp78–Gly81, Thr145–Asp148, and Phe178–Ser180. Mg(2+) is bound by residues Ser40 and Thr62.

It belongs to the TRAFAC class TrmE-Era-EngA-EngB-Septin-like GTPase superfamily. EngB GTPase family. The cofactor is Mg(2+).

In terms of biological role, necessary for normal cell division and for the maintenance of normal septation. The protein is Probable GTP-binding protein EngB of Shigella flexneri.